We begin with the raw amino-acid sequence, 250 residues long: Anti-Pycsar protein Apyc1 (250 aa).

Positions 19 to 220 (YNNNALVKCN…AVQEMIMLMH (202 aa)) are beta-lactamase-like. Zn(2+) contacts are provided by histidine 61, histidine 63, aspartate 65, histidine 66, histidine 146, aspartate 166, and histidine 220.

It belongs to the anti-Pycsar protein Apyc1 family. As to quaternary structure, homodimer. Zn(2+) serves as cofactor.

The catalysed reaction is 3',5'-cyclic CMP + H2O = CMP + H(+). The enzyme catalyses 3',5'-cyclic UMP + H2O = UMP + H(+). Counteracts the endogenous Pycsar antiviral defense system. Phosphodiesterase that enables metal-dependent hydrolysis of host cyclic nucleotide Pycsar defense signals such as cCMP and cUMP. The protein is Anti-Pycsar protein Apyc1 of Paenibacillus xerothermodurans.